The sequence spans 352 residues: Selenide, water dikinase (352 aa).

Residue Cys-23 is part of the active site. ATP is bound by residues Lys-26 and 54 to 56 (SRD). Position 57 (Asp-57) interacts with Mg(2+). ATP contacts are provided by residues Asp-74, Asp-97, and 145-147 (GHS). Position 97 (Asp-97) interacts with Mg(2+). Asp-233 provides a ligand contact to Mg(2+).

Belongs to the selenophosphate synthase 1 family. Class I subfamily. As to quaternary structure, homodimer. It depends on Mg(2+) as a cofactor.

It carries out the reaction hydrogenselenide + ATP + H2O = selenophosphate + AMP + phosphate + 2 H(+). Its function is as follows. Synthesizes selenophosphate from selenide and ATP. This Shewanella baltica (strain OS223) protein is Selenide, water dikinase.